The following is a 295-amino-acid chain: Probable dTDP-4,6-dihydroxy-2-methyloxan-3-one 4-ketoreductase (295 aa).

Residues 10 to 12 (GML), 36 to 37 (DV), 60 to 62 (AYT), Tyr-126, and Lys-130 contribute to the NADH site. NADPH-binding positions include 11-12 (ML), 36-37 (DV), 60-62 (AYT), Tyr-126, and Lys-130. Tyr-126 (proton donor/acceptor) is an active-site residue.

Belongs to the dTDP-4-dehydrorhamnose reductase family. It depends on Mg(2+) as a cofactor.

It participates in antibiotic biosynthesis. Its function is as follows. Involved in the biosynthesis of one of the two 2,6-deoxysugars, dTDP-L-oleandrose, attached to the macrolactone ring oleandolide to produce the aglycone antibiotic oleandomycin. Probably catalyzes the reduction of dTDP-4-keto-2,6-dideoxy-beta-L-galactose to yield dTDP-L-olivose. This chain is Probable dTDP-4,6-dihydroxy-2-methyloxan-3-one 4-ketoreductase, found in Streptomyces antibioticus.